Consider the following 228-residue polypeptide: Ribosomal RNA small subunit methyltransferase G (228 aa).

Residues glycine 70, 121–122 (AE), and arginine 138 each bind S-adenosyl-L-methionine.

This sequence belongs to the methyltransferase superfamily. RNA methyltransferase RsmG family.

The protein localises to the cytoplasm. Functionally, specifically methylates the N7 position of a guanine in 16S rRNA. This is Ribosomal RNA small subunit methyltransferase G from Thermotoga sp. (strain RQ2).